A 312-amino-acid polypeptide reads, in one-letter code: Aspartate carbamoyltransferase catalytic subunit (312 aa).

The carbamoyl phosphate site is built by R57 and T58. K85 provides a ligand contact to L-aspartate. Carbamoyl phosphate contacts are provided by R107, H135, and Q138. Residues R168 and R222 each contribute to the L-aspartate site. Residues G264 and P265 each coordinate carbamoyl phosphate.

Belongs to the aspartate/ornithine carbamoyltransferase superfamily. ATCase family. In terms of assembly, heterododecamer (2C3:3R2) of six catalytic PyrB chains organized as two trimers (C3), and six regulatory PyrI chains organized as three dimers (R2).

The enzyme catalyses carbamoyl phosphate + L-aspartate = N-carbamoyl-L-aspartate + phosphate + H(+). The protein operates within pyrimidine metabolism; UMP biosynthesis via de novo pathway; (S)-dihydroorotate from bicarbonate: step 2/3. Functionally, catalyzes the condensation of carbamoyl phosphate and aspartate to form carbamoyl aspartate and inorganic phosphate, the committed step in the de novo pyrimidine nucleotide biosynthesis pathway. The protein is Aspartate carbamoyltransferase catalytic subunit of Carboxydothermus hydrogenoformans (strain ATCC BAA-161 / DSM 6008 / Z-2901).